We begin with the raw amino-acid sequence, 254 residues long: MFAFLTSKKVGILPSRWGSSRFPGKPLAKILGKTLVQRSYENALSSQSLDCVVVATDDQRIFDHVVEFGGLCVMTSTSCANGTERVEEVVSRHFPQAEIVVNIQGDEPCLSPTVIDGLVSTLENNPAADMVTSVTETTDPEAILTDHKVKCVFDKNGKALYFSRSAIPHNFKHPTPIYLHIGVYAFRKAFLSEYVKIPPSSLSLAEDLEQLRVLEIGRSIYVHVVQNATGPSVDYPEDITKVEQYLLCLSKASF.

This sequence belongs to the KdsB family.

The protein resides in the cytoplasm. It carries out the reaction 3-deoxy-alpha-D-manno-oct-2-ulosonate + CTP = CMP-3-deoxy-beta-D-manno-octulosonate + diphosphate. It participates in nucleotide-sugar biosynthesis; CMP-3-deoxy-D-manno-octulosonate biosynthesis; CMP-3-deoxy-D-manno-octulosonate from 3-deoxy-D-manno-octulosonate and CTP: step 1/1. Its pathway is bacterial outer membrane biogenesis; lipopolysaccharide biosynthesis. Its function is as follows. Activates KDO (a required 8-carbon sugar) for incorporation into bacterial lipopolysaccharide in Gram-negative bacteria. The protein is 3-deoxy-manno-octulosonate cytidylyltransferase of Chlamydia trachomatis serovar A (strain ATCC VR-571B / DSM 19440 / HAR-13).